We begin with the raw amino-acid sequence, 307 residues long: Acetaldehyde dehydrogenase 2 (307 aa).

The Acyl-thioester intermediate role is filled by cysteine 131. NAD(+)-binding positions include 162 to 170 (SVGPGTRKN) and asparagine 273.

It belongs to the acetaldehyde dehydrogenase family.

It catalyses the reaction acetaldehyde + NAD(+) + CoA = acetyl-CoA + NADH + H(+). The chain is Acetaldehyde dehydrogenase 2 (aphF) from Comamonas testosteroni (Pseudomonas testosteroni).